The chain runs to 469 residues: Glutamate--tRNA ligase (469 aa).

Positions 11 to 21 match the 'HIGH' region motif; the sequence is PSPTGFIHLGN. The 'KMSKS' region signature appears at 243 to 247; sequence KMSKR. Lys246 is an ATP binding site.

Belongs to the class-I aminoacyl-tRNA synthetase family. Glutamate--tRNA ligase type 1 subfamily. In terms of assembly, monomer.

Its subcellular location is the cytoplasm. It carries out the reaction tRNA(Glu) + L-glutamate + ATP = L-glutamyl-tRNA(Glu) + AMP + diphosphate. Catalyzes the attachment of glutamate to tRNA(Glu) in a two-step reaction: glutamate is first activated by ATP to form Glu-AMP and then transferred to the acceptor end of tRNA(Glu). The chain is Glutamate--tRNA ligase from Burkholderia orbicola (strain AU 1054).